A 512-amino-acid chain; its full sequence is Cytochrome P450 monooxygenase ABA1 (512 aa).

Residues histidine 13 to isoleucine 32 traverse the membrane as a helical segment. Cysteine 458 is a binding site for heme.

This sequence belongs to the cytochrome P450 family. The cofactor is heme.

The protein resides in the membrane. The protein operates within hormone biosynthesis. Its function is as follows. Cytochrome P450 monooxygenase involved in the biosynthesis of abscisic acid (ABA), a phytohormone that acts antagonistically toward salicylic acid (SA), jasmonic acid (JA) and ethylene (ETH) signaling, to impede plant defense responses. During pathogen-host interaction, ABA plays a dual role in disease severity by increasing plant susceptibility and accelerating pathogenesis in the fungus itself. The first step of the pathway catalyzes the reaction from farnesyl diphosphate to alpha-ionylideneethane performed by the alpha-ionylideneethane synthase ABA3 via a three-step reaction mechanism involving 2 neutral intermediates, beta-farnesene and allofarnesene. The cytochrome P450 monooxygenase ABA1 might then be involved in the conversion of alpha-ionylideneethane to alpha-ionylideneacetic acid. Alpha-ionylideneacetic acid is further converted to abscisic acid in 2 steps involving the cytochrome P450 monooxygenase ABA2 and the short-chain dehydrogenase/reductase ABA4, via the intermediates 1'-deoxy-ABA or 1',4'-trans-diol-ABA, depending on the order of action of these 2 enzymes. ABA2 is responsible for the hydroxylation of carbon atom C-1' and ABA4 might be involved in the oxidation of the C-4' carbon atom. The protein is Cytochrome P450 monooxygenase ABA1 of Pyricularia oryzae (strain Y34) (Rice blast fungus).